The primary structure comprises 85 residues: Large ribosomal subunit protein bL27 (85 aa).

Residues 1–22 are disordered; sequence MAHKKAGGSTNNGRDSESKRLG.

It belongs to the bacterial ribosomal protein bL27 family.

The chain is Large ribosomal subunit protein bL27 from Vibrio atlanticus (strain LGP32) (Vibrio splendidus (strain Mel32)).